The chain runs to 276 residues: Diaminopimelate epimerase (276 aa).

N13, Q46, and N66 together coordinate substrate. The active-site Proton donor is the C75. Substrate is bound by residues 76 to 77 (GN), N159, N192, and 210 to 211 (ER). The active-site Proton acceptor is the C219. Residue 220–221 (GT) participates in substrate binding.

This sequence belongs to the diaminopimelate epimerase family. In terms of assembly, homodimer.

The protein localises to the cytoplasm. The catalysed reaction is (2S,6S)-2,6-diaminopimelate = meso-2,6-diaminopimelate. It participates in amino-acid biosynthesis; L-lysine biosynthesis via DAP pathway; DL-2,6-diaminopimelate from LL-2,6-diaminopimelate: step 1/1. Catalyzes the stereoinversion of LL-2,6-diaminopimelate (L,L-DAP) to meso-diaminopimelate (meso-DAP), a precursor of L-lysine and an essential component of the bacterial peptidoglycan. The protein is Diaminopimelate epimerase of Chromobacterium violaceum (strain ATCC 12472 / DSM 30191 / JCM 1249 / CCUG 213 / NBRC 12614 / NCIMB 9131 / NCTC 9757 / MK).